We begin with the raw amino-acid sequence, 158 residues long: 2-C-methyl-D-erythritol 2,4-cyclodiphosphate synthase (158 aa).

Residues aspartate 9 and histidine 11 each contribute to the a divalent metal cation site. Residues 9–11 (DVH) and 35–36 (HS) contribute to the 4-CDP-2-C-methyl-D-erythritol 2-phosphate site. Histidine 43 contacts a divalent metal cation. 4-CDP-2-C-methyl-D-erythritol 2-phosphate-binding positions include 57-59 (DIG), 62-66 (FPDTD), 133-136 (TTTE), phenylalanine 140, and arginine 143.

The protein belongs to the IspF family. In terms of assembly, homotrimer. A divalent metal cation serves as cofactor.

It carries out the reaction 4-CDP-2-C-methyl-D-erythritol 2-phosphate = 2-C-methyl-D-erythritol 2,4-cyclic diphosphate + CMP. The protein operates within isoprenoid biosynthesis; isopentenyl diphosphate biosynthesis via DXP pathway; isopentenyl diphosphate from 1-deoxy-D-xylulose 5-phosphate: step 4/6. Functionally, involved in the biosynthesis of isopentenyl diphosphate (IPP) and dimethylallyl diphosphate (DMAPP), two major building blocks of isoprenoid compounds. Catalyzes the conversion of 4-diphosphocytidyl-2-C-methyl-D-erythritol 2-phosphate (CDP-ME2P) to 2-C-methyl-D-erythritol 2,4-cyclodiphosphate (ME-CPP) with a corresponding release of cytidine 5-monophosphate (CMP). The polypeptide is 2-C-methyl-D-erythritol 2,4-cyclodiphosphate synthase (Haemophilus influenzae (strain 86-028NP)).